The sequence spans 268 residues: Glucosamine-6-phosphate deaminase (268 aa).

D72 acts as the Proton acceptor; for enolization step in catalysis. Residue D141 is the For ring-opening step of the active site. The Proton acceptor; for ring-opening step role is filled by H143. E148 (for ring-opening step) is an active-site residue.

It belongs to the glucosamine/galactosamine-6-phosphate isomerase family. NagB subfamily.

It catalyses the reaction alpha-D-glucosamine 6-phosphate + H2O = beta-D-fructose 6-phosphate + NH4(+). Its pathway is amino-sugar metabolism; N-acetylneuraminate degradation; D-fructose 6-phosphate from N-acetylneuraminate: step 5/5. With respect to regulation, allosterically activated by N-acetylglucosamine 6-phosphate (GlcNAc6P). Catalyzes the reversible isomerization-deamination of glucosamine 6-phosphate (GlcN6P) to form fructose 6-phosphate (Fru6P) and ammonium ion. In Borrelia garinii subsp. bavariensis (strain ATCC BAA-2496 / DSM 23469 / PBi) (Borreliella bavariensis), this protein is Glucosamine-6-phosphate deaminase.